A 534-amino-acid chain; its full sequence is N-acetylglutamate synthase, mitochondrial (534 aa).

The transit peptide at 1 to 18 (MATALMAVVLRAAAVAPR) directs the protein to the mitochondrion. The tract at residues 19 to 99 (LRGRGGTGGA…HESPEPPSGR (81 aa)) is disordered. The amino-acid kinase domain (AAK) stretch occupies residues 19–376 (LRGRGGTGGA…SGTLFKNAER (358 aa)). Residues 81–96 (VPSPRPPVPHESPEPP) show a composition bias toward pro residues. Positions 375-526 (ERMLRVRSLD…HAKGLPDSFH (152 aa)) constitute an N-acetyltransferase domain. Residues lysine 401, lysine 444, and 474 to 479 (RSRVTN) each bind substrate.

This sequence belongs to the acetyltransferase family. In terms of assembly, homodimer. Homotetramer. Post-translationally, probably processed by mitochondrial processing peptidase (MPP). The long form has not yet been isolated. As to expression, highly expressed in the adult liver, kidney and small intestine. Weakly expressed in the fetal liver, lung, pancreas, placenta, heart and brain tissue.

It is found in the mitochondrion matrix. The enzyme catalyses L-glutamate + acetyl-CoA = N-acetyl-L-glutamate + CoA + H(+). Its pathway is amino-acid biosynthesis; L-arginine biosynthesis; N(2)-acetyl-L-ornithine from L-glutamate: step 1/4. Increased by L-arginine. Functionally, plays a role in the regulation of ureagenesis by producing the essential cofactor N-acetylglutamate (NAG), thus modulating carbamoylphosphate synthase I (CPS1) activity. This is N-acetylglutamate synthase, mitochondrial (NAGS) from Homo sapiens (Human).